Consider the following 91-residue polypeptide: Small ribosomal subunit protein bS20 (91 aa).

Positions 1–18 are enriched in basic and acidic residues; sequence MPLHKSAEKRLRQSDRKN. The segment at 1-25 is disordered; sequence MPLHKSAEKRLRQSDRKNARNRARK.

The protein belongs to the bacterial ribosomal protein bS20 family.

Its function is as follows. Binds directly to 16S ribosomal RNA. In Chlorobium phaeovibrioides (strain DSM 265 / 1930) (Prosthecochloris vibrioformis (strain DSM 265)), this protein is Small ribosomal subunit protein bS20.